We begin with the raw amino-acid sequence, 420 residues long: Transcriptional adapter 2-beta (420 aa).

A ZZ-type zinc finger spans residues 4-59 (LSKKYCVYCLADVTSLRLRCTECQDIELCTDCFSAGAEIGNHRRWHGYQLVDGGRF). Cys-9, Cys-12, Cys-23, Cys-26, Cys-32, Cys-35, His-45, and His-49 together coordinate Zn(2+). The region spanning 65–118 (EAEGGWTSREEQLLLDAIEQFGFGNWEDMAAHVGASRTPTEVMEHYVTMYIHGN) is the SANT domain. Positions 303-333 (EESAEYEAARHKREKRKENKNIANSKRGRED) are disordered.

It localises to the nucleus. Its function is as follows. Transcriptional coactivator. In Xenopus laevis (African clawed frog), this protein is Transcriptional adapter 2-beta (tada2b).